We begin with the raw amino-acid sequence, 29 residues long: Brevinin-2Td (29 aa).

The cysteines at positions 23 and 29 are disulfide-linked.

It belongs to the frog skin active peptide (FSAP) family. Brevinin subfamily. As to expression, expressed by the skin glands.

The protein resides in the secreted. Antibacterial activity against representative Gram-negative and Gram-positive bacteria. The polypeptide is Brevinin-2Td (Rana temporaria (European common frog)).